The following is a 1345-amino-acid chain: Aldehyde oxidase 2 (1345 aa).

Positions 9–96 constitute a 2Fe-2S ferredoxin-type domain; that stretch reads DDLEFFVNGR…GAAVTTVEGV (88 aa). Cysteine 48, cysteine 53, cysteine 56, and cysteine 78 together coordinate [2Fe-2S] cluster. Residue glutamine 117 participates in Mo-molybdopterin binding. [2Fe-2S] cluster-binding residues include cysteine 118, cysteine 121, cysteine 153, and cysteine 155. A Mo-molybdopterin-binding site is contributed by cysteine 155. The FAD-binding PCMH-type domain occupies 238 to 423; it reads FYGERITWIA…GSVYIPHSQK (186 aa). Residues 266–273, alanine 347, serine 356, histidine 360, aspartate 369, and leucine 413 each bind FAD; that span reads LISGNTAL. Mo-molybdopterin is bound by residues 812 to 813, 1094 to 1097, glutamine 1209, and leucine 1274; these read GF and ASVG. The active-site Proton acceptor; for azaheterocycle hydroxylase activity is glutamate 1276.

It belongs to the xanthine dehydrogenase family. As to quaternary structure, homodimer. It depends on [2Fe-2S] cluster as a cofactor. Requires FAD as cofactor. Mo-molybdopterin serves as cofactor. Expressed in olfactory mucosa epithelium (at protein level). Detected in skin.

It localises to the cytoplasm. The enzyme catalyses an aldehyde + O2 + H2O = a carboxylate + H2O2 + H(+). In terms of biological role, oxidase with broad substrate specificity, oxidizing aromatic azaheterocycles, such as phthalazine, as well as aldehydes, such as benzaldehyde and retinal. Cannot use hypoxanthine as substrate. This Mus musculus (Mouse) protein is Aldehyde oxidase 2 (Aox2).